We begin with the raw amino-acid sequence, 500 residues long: Probable cytosol aminopeptidase (500 aa).

2 residues coordinate Mn(2+): lysine 264 and aspartate 269. Lysine 276 is a catalytic residue. Mn(2+) contacts are provided by aspartate 287, aspartate 346, and glutamate 348. Arginine 350 is an active-site residue.

The protein belongs to the peptidase M17 family. It depends on Mn(2+) as a cofactor.

The protein localises to the cytoplasm. It carries out the reaction Release of an N-terminal amino acid, Xaa-|-Yaa-, in which Xaa is preferably Leu, but may be other amino acids including Pro although not Arg or Lys, and Yaa may be Pro. Amino acid amides and methyl esters are also readily hydrolyzed, but rates on arylamides are exceedingly low.. The catalysed reaction is Release of an N-terminal amino acid, preferentially leucine, but not glutamic or aspartic acids.. Its function is as follows. Presumably involved in the processing and regular turnover of intracellular proteins. Catalyzes the removal of unsubstituted N-terminal amino acids from various peptides. The polypeptide is Probable cytosol aminopeptidase (Rhodopseudomonas palustris (strain BisB5)).